The sequence spans 129 residues: Lysozyme C-1 (129 aa).

In terms of domain architecture, C-type lysozyme spans 1 to 129; sequence KVFERCELAR…VSSYVEGCTL (129 aa). 4 disulfides stabilise this stretch: C6–C127, C30–C115, C65–C81, and C77–C95. Catalysis depends on residues E35 and D53.

The protein belongs to the glycosyl hydrolase 22 family. In terms of assembly, monomer.

It carries out the reaction Hydrolysis of (1-&gt;4)-beta-linkages between N-acetylmuramic acid and N-acetyl-D-glucosamine residues in a peptidoglycan and between N-acetyl-D-glucosamine residues in chitodextrins.. Functionally, lysozymes have primarily a bacteriolytic function; those in tissues and body fluids are associated with the monocyte-macrophage system and enhance the activity of immunoagents. The sequence is that of Lysozyme C-1 from Capra hircus (Goat).